Consider the following 124-residue polypeptide: Fluoride-specific ion channel FluC (124 aa).

Transmembrane regions (helical) follow at residues 5–25 (LVVF…NLAA), 36–56 (TMII…WFAV), 70–90 (TGIL…FLLM), and 100–120 (LYVL…LAVI). Na(+) is bound by residues glycine 74 and threonine 77.

It belongs to the fluoride channel Fluc/FEX (TC 1.A.43) family.

The protein resides in the cell inner membrane. The catalysed reaction is fluoride(in) = fluoride(out). With respect to regulation, na(+) is not transported, but it plays an essential structural role and its presence is essential for fluoride channel function. Fluoride-specific ion channel. Important for reducing fluoride concentration in the cell, thus reducing its toxicity. In Methylobacterium nodulans (strain LMG 21967 / CNCM I-2342 / ORS 2060), this protein is Fluoride-specific ion channel FluC.